The following is a 260-amino-acid chain: Uroplakin-1b (260 aa).

The Cytoplasmic portion of the chain corresponds to 1–15; sequence MAKDDSTVRCFQGLL. The chain crosses the membrane as a helical span at residues 16 to 36; that stretch reads IFGHVIVGMCGIALTAECIFF. The Extracellular segment spans residues 37–59; sequence VSDQHSLYPLLEATNNDDIFGAA. A helical transmembrane segment spans residues 60-80; it reads WIGMFVGICLFCLSVLAIVGI. The Cytoplasmic segment spans residues 81–86; the sequence is MKSNRK. Residues 87 to 107 form a helical membrane-spanning segment; that stretch reads ILLAYFIMMFIVYGFEVASCI. At 108–229 the chain is on the extracellular side; it reads TAATQRDFFT…ELISGPMDRH (122 aa). A helical membrane pass occupies residues 230–250; sequence AWGVAWFGFAILCWTFWVLLG. At 251–260 the chain is on the cytoplasmic side; sequence TMFYWSRIEY.

Belongs to the tetraspanin (TM4SF) family. As to quaternary structure, heterodimer with uroplakin-3A (UPK3A) or uroplakin-3B (UPK3B). N-glycosylated with high-mannose oligosaccharides. In terms of tissue distribution, bladder epithelium.

It localises to the membrane. Functionally, component of the asymmetric unit membrane (AUM); a highly specialized biomembrane elaborated by terminally differentiated urothelial cells. May play an important role in normal bladder epithelial physiology, possibly in regulating membrane permeability of superficial umbrella cells or in stabilizing the apical membrane through AUM/cytoskeletal interactions. This chain is Uroplakin-1b (Upk1b), found in Mus musculus (Mouse).